The chain runs to 119 residues: Large ribosomal subunit protein uL18 (119 aa).

It belongs to the universal ribosomal protein uL18 family. As to quaternary structure, part of the 50S ribosomal subunit; part of the 5S rRNA/L5/L18/L25 subcomplex. Contacts the 5S and 23S rRNAs.

Functionally, this is one of the proteins that bind and probably mediate the attachment of the 5S RNA into the large ribosomal subunit, where it forms part of the central protuberance. This is Large ribosomal subunit protein uL18 from Clostridium botulinum (strain ATCC 19397 / Type A).